Consider the following 140-residue polypeptide: Ribosome-binding factor A (140 aa).

The disordered stretch occupies residues 121–140; sequence KAAEHGREDEELDDTEQDDK. The span at 129–140 shows a compositional bias: acidic residues; the sequence is DEELDDTEQDDK.

The protein belongs to the RbfA family. Monomer. Binds 30S ribosomal subunits, but not 50S ribosomal subunits or 70S ribosomes.

The protein resides in the cytoplasm. In terms of biological role, one of several proteins that assist in the late maturation steps of the functional core of the 30S ribosomal subunit. Associates with free 30S ribosomal subunits (but not with 30S subunits that are part of 70S ribosomes or polysomes). Required for efficient processing of 16S rRNA. May interact with the 5'-terminal helix region of 16S rRNA. The chain is Ribosome-binding factor A from Shewanella loihica (strain ATCC BAA-1088 / PV-4).